Here is a 535-residue protein sequence, read N- to C-terminus: CTP synthase (535 aa).

An amidoligase domain region spans residues 1–266 (MKTKFIFITG…DERVVEKLNI (266 aa)). Position 14 (serine 14) interacts with CTP. Serine 14 is a UTP binding site. Residues 15 to 20 (SIGKGL) and aspartate 72 each bind ATP. Mg(2+) is bound by residues aspartate 72 and glutamate 140. Residues 147–149 (DIE), 187–192 (KTKPTQ), and lysine 223 each bind CTP. UTP contacts are provided by residues 187-192 (KTKPTQ) and lysine 223. The Glutamine amidotransferase type-1 domain maps to 292 to 534 (RIAIVGKYVN…VRAALIQRDA (243 aa)). Glycine 354 contributes to the L-glutamine binding site. The active-site Nucleophile; for glutamine hydrolysis is the cysteine 381. Residues 382–385 (LGMQ), glutamate 405, and arginine 462 contribute to the L-glutamine site. Residues histidine 507 and glutamate 509 contribute to the active site.

The protein belongs to the CTP synthase family. In terms of assembly, homotetramer.

The enzyme catalyses UTP + L-glutamine + ATP + H2O = CTP + L-glutamate + ADP + phosphate + 2 H(+). The catalysed reaction is L-glutamine + H2O = L-glutamate + NH4(+). It carries out the reaction UTP + NH4(+) + ATP = CTP + ADP + phosphate + 2 H(+). Its pathway is pyrimidine metabolism; CTP biosynthesis via de novo pathway; CTP from UDP: step 2/2. Its activity is regulated as follows. Allosterically activated by GTP, when glutamine is the substrate; GTP has no effect on the reaction when ammonia is the substrate. The allosteric effector GTP functions by stabilizing the protein conformation that binds the tetrahedral intermediate(s) formed during glutamine hydrolysis. Inhibited by the product CTP, via allosteric rather than competitive inhibition. In terms of biological role, catalyzes the ATP-dependent amination of UTP to CTP with either L-glutamine or ammonia as the source of nitrogen. Regulates intracellular CTP levels through interactions with the four ribonucleotide triphosphates. This chain is CTP synthase, found in Pelobacter propionicus (strain DSM 2379 / NBRC 103807 / OttBd1).